We begin with the raw amino-acid sequence, 477 residues long: UDP-N-acetylmuramate--L-alanine ligase (477 aa).

120 to 126 (GSHGKTT) is a binding site for ATP.

The protein belongs to the MurCDEF family.

The protein resides in the cytoplasm. It catalyses the reaction UDP-N-acetyl-alpha-D-muramate + L-alanine + ATP = UDP-N-acetyl-alpha-D-muramoyl-L-alanine + ADP + phosphate + H(+). It participates in cell wall biogenesis; peptidoglycan biosynthesis. In terms of biological role, cell wall formation. The polypeptide is UDP-N-acetylmuramate--L-alanine ligase (Rickettsia canadensis (strain McKiel)).